Consider the following 69-residue polypeptide: Cytochrome c oxidase subunit 8A, mitochondrial (69 aa).

The transit peptide at 1–25 (MSVLTPLLLRSLTGSARRLMVPRAQ) directs the protein to the mitochondrion. Positions 2–19 (SVLTPLLLRSLTGSARRL) match the SIFI-degron motif. Topologically, residues 26–36 (VHSKPAREQLG) are mitochondrial matrix. A helical transmembrane segment spans residues 37–60 (VLDITIGLTSCFVCCLLPAGWVLS). The Mitochondrial intermembrane portion of the chain corresponds to 61–69 (HLESYKKRE).

This sequence belongs to the cytochrome c oxidase VIII family. Component of the cytochrome c oxidase (complex IV, CIV), a multisubunit enzyme composed of 14 subunits. The complex is composed of a catalytic core of 3 subunits MT-CO1, MT-CO2 and MT-CO3, encoded in the mitochondrial DNA, and 11 supernumerary subunits COX4I, COX5A, COX5B, COX6A, COX6B, COX6C, COX7A, COX7B, COX7C, COX8 and NDUFA4, which are encoded in the nuclear genome. The complex exists as a monomer or a dimer and forms supercomplexes (SCs) in the inner mitochondrial membrane with NADH-ubiquinone oxidoreductase (complex I, CI) and ubiquinol-cytochrome c oxidoreductase (cytochrome b-c1 complex, complex III, CIII), resulting in different assemblies (supercomplex SCI(1)III(2)IV(1) and megacomplex MCI(2)III(2)IV(2)). In terms of processing, in response to mitochondrial stress, the precursor protein is ubiquitinated by the SIFI complex in the cytoplasm before mitochondrial import, leading to its degradation. Within the SIFI complex, UBR4 initiates ubiquitin chain that are further elongated or branched by KCMF1.

The protein localises to the mitochondrion inner membrane. It participates in energy metabolism; oxidative phosphorylation. Functionally, component of the cytochrome c oxidase, the last enzyme in the mitochondrial electron transport chain which drives oxidative phosphorylation. The respiratory chain contains 3 multisubunit complexes succinate dehydrogenase (complex II, CII), ubiquinol-cytochrome c oxidoreductase (cytochrome b-c1 complex, complex III, CIII) and cytochrome c oxidase (complex IV, CIV), that cooperate to transfer electrons derived from NADH and succinate to molecular oxygen, creating an electrochemical gradient over the inner membrane that drives transmembrane transport and the ATP synthase. Cytochrome c oxidase is the component of the respiratory chain that catalyzes the reduction of oxygen to water. Electrons originating from reduced cytochrome c in the intermembrane space (IMS) are transferred via the dinuclear copper A center (CU(A)) of subunit 2 and heme A of subunit 1 to the active site in subunit 1, a binuclear center (BNC) formed by heme A3 and copper B (CU(B)). The BNC reduces molecular oxygen to 2 water molecules using 4 electrons from cytochrome c in the IMS and 4 protons from the mitochondrial matrix. This chain is Cytochrome c oxidase subunit 8A, mitochondrial (Cox8a), found in Mus musculus (Mouse).